A 117-amino-acid chain; its full sequence is MTRAKSGKISKNRHKKILKLAKGYRGRASTCFRVAIEKVEKGLQYAYRDRRNRKRDFRGLWIQRINAAVREHGLVYSQFMGALKKAEIDIDRKVLAELAVNNNEEFASIVEQAKAHI.

It belongs to the bacterial ribosomal protein bL20 family.

Functionally, binds directly to 23S ribosomal RNA and is necessary for the in vitro assembly process of the 50S ribosomal subunit. It is not involved in the protein synthesizing functions of that subunit. This Rickettsia bellii (strain OSU 85-389) protein is Large ribosomal subunit protein bL20.